The chain runs to 209 residues: uncharacterized protein (209 aa).

Positions 39–75 form a coiled coil; the sequence is VSFENFMERYDTMEKNIQDLQNKYEEMANNLVAVMAD. Residues 103–131 form a disordered region; the sequence is TMKDATSLPPPNPNNEQSVFTNGSPTSGK. The span at 116 to 129 shows a compositional bias: polar residues; the sequence is NNEQSVFTNGSPTS.

This sequence belongs to the asfivirus K205R family.

Its subcellular location is the host cytoplasm. Functionally, induces host endoplasmic reticulum stress and consequently activates autophagy and NF-kappa-B signaling pathway. In turn, may induce autophagy-mediated STING1 degradation and innate immune evasion. This is an uncharacterized protein from Ornithodoros (relapsing fever ticks).